We begin with the raw amino-acid sequence, 430 residues long: GTPase Obg (430 aa).

In terms of domain architecture, Obg spans 1-158; sequence MFVDQVKISL…LDVSLELKLL (158 aa). Positions 118-145 are disordered; that stretch reads KGGRGGRGNSRFATPRNPAPDFSEKGEP. The 171-residue stretch at 159–329 folds into the OBG-type G domain; the sequence is ADVGLVGFPS…LLYAIADKLE (171 aa). Residues 165–172, 190–194, 212–215, 282–285, and 310–312 contribute to the GTP site; these read GFPSVGKS, FTTIK, DLPG, NKMD, and STI. 2 residues coordinate Mg(2+): S172 and T192. The OCT domain occupies 352–430; the sequence is KHTPSQDKFT…ILGGEFEFVE (79 aa).

The protein belongs to the TRAFAC class OBG-HflX-like GTPase superfamily. OBG GTPase family. As to quaternary structure, monomer. Mg(2+) is required as a cofactor.

It localises to the cytoplasm. Its function is as follows. An essential GTPase which binds GTP, GDP and possibly (p)ppGpp with moderate affinity, with high nucleotide exchange rates and a fairly low GTP hydrolysis rate. Plays a role in control of the cell cycle, stress response, ribosome biogenesis and in those bacteria that undergo differentiation, in morphogenesis control. The sequence is that of GTPase Obg from Staphylococcus aureus (strain bovine RF122 / ET3-1).